A 234-amino-acid chain; its full sequence is Probable Ufm1-specific protease 1 (234 aa).

Residues C70, D194, and H196 contribute to the active site.

It belongs to the peptidase C78 family.

In terms of biological role, thiol protease which recognizes and hydrolyzes the peptide bond at the C-terminal Gly of UFM1, a ubiquitin-like modifier protein bound to a number of target proteins. In Drosophila melanogaster (Fruit fly), this protein is Probable Ufm1-specific protease 1.